The sequence spans 69 residues: Large ribosomal subunit protein bL31 (69 aa).

Residues Cys-17, Cys-19, Cys-37, and Cys-40 each coordinate Zn(2+).

It belongs to the bacterial ribosomal protein bL31 family. Type A subfamily. As to quaternary structure, part of the 50S ribosomal subunit. Zn(2+) is required as a cofactor.

In terms of biological role, binds the 23S rRNA. The polypeptide is Large ribosomal subunit protein bL31 (Caldicellulosiruptor bescii (strain ATCC BAA-1888 / DSM 6725 / KCTC 15123 / Z-1320) (Anaerocellum thermophilum)).